We begin with the raw amino-acid sequence, 921 residues long: Isoleucine--tRNA ligase (921 aa).

The 'HIGH' region motif lies at 59 to 69; it reads PYANGHLHIGH. Glutamate 569 contributes to the L-isoleucyl-5'-AMP binding site. A 'KMSKS' region motif is present at residues 610–614; the sequence is KMSKS. ATP is bound at residue lysine 613. Residues cysteine 896, cysteine 899, cysteine 911, and cysteine 914 each contribute to the Zn(2+) site.

The protein belongs to the class-I aminoacyl-tRNA synthetase family. IleS type 1 subfamily. In terms of assembly, monomer. Requires Zn(2+) as cofactor.

The protein localises to the cytoplasm. It catalyses the reaction tRNA(Ile) + L-isoleucine + ATP = L-isoleucyl-tRNA(Ile) + AMP + diphosphate. Its function is as follows. Catalyzes the attachment of isoleucine to tRNA(Ile). As IleRS can inadvertently accommodate and process structurally similar amino acids such as valine, to avoid such errors it has two additional distinct tRNA(Ile)-dependent editing activities. One activity is designated as 'pretransfer' editing and involves the hydrolysis of activated Val-AMP. The other activity is designated 'posttransfer' editing and involves deacylation of mischarged Val-tRNA(Ile). This Campylobacter hominis (strain ATCC BAA-381 / DSM 21671 / CCUG 45161 / LMG 19568 / NCTC 13146 / CH001A) protein is Isoleucine--tRNA ligase.